Consider the following 138-residue polypeptide: Growth factor (138 aa).

The first 19 residues, 1 to 19 (MSMKYLMLLFAAMIIRSFA), serve as a signal peptide directing secretion. Residue asparagine 34 is glycosylated (N-linked (GlcNAc...) asparagine; by host). The region spanning 41-81 (AIRLCGPEGDGYCLHGDCIHARDIDGMYCRCSHGYTGIRCQ) is the EGF-like domain. 3 disulfide bridges follow: cysteine 45/cysteine 58, cysteine 53/cysteine 69, and cysteine 71/cysteine 80. Asparagine 95 carries N-linked (GlcNAc...) asparagine; by host glycosylation.

The protein belongs to the orthopoxvirus OPG019 family.

It localises to the secreted. Stimulates cellular proliferation (hyperplasia)and mobility around infected cells to promote rapid and efficient spread of infection. This Rabbitpox virus (strain Utrecht) (RPV) protein is Growth factor (OPG019).